We begin with the raw amino-acid sequence, 145 residues long: Basic phospholipase A2 P'513 (145 aa).

Residues 1–21 (MYPAHLLLLLAVCVSLLGASA) form the signal peptide. Residues 22–27 (IPPLPL) constitute a propeptide that is removed on maturation. 7 disulfides stabilise this stretch: Cys-38/Cys-98, Cys-54/Cys-144, Cys-56/Cys-72, Cys-71/Cys-125, Cys-78/Cys-118, Cys-87/Cys-111, and Cys-105/Cys-116. Positions 55, 57, and 59 each coordinate Ca(2+). The active site involves His-75. Asp-76 is a binding site for Ca(2+). Residue Asp-119 is part of the active site.

It belongs to the phospholipase A2 family. Group I subfamily. D49 sub-subfamily. Requires Ca(2+) as cofactor. Expressed by the venom gland.

It localises to the secreted. The catalysed reaction is a 1,2-diacyl-sn-glycero-3-phosphocholine + H2O = a 1-acyl-sn-glycero-3-phosphocholine + a fatty acid + H(+). Functionally, PLA2 catalyzes the calcium-dependent hydrolysis of the 2-acyl groups in 3-sn-phosphoglycerides. The protein is Basic phospholipase A2 P'513 of Laticauda laticaudata (Blue-ringed sea krait).